Reading from the N-terminus, the 312-residue chain is MTSIVVAALYKFVTLDDYVALREPLLQTLLDNGVKGTLLLAEEGINGTVSGSREGIDALFAWLRSDPRLADIEHKESYCDEQPFYRTKVKLKKEIVTLGVPGVDPNKRVGQYVEAKDWNALISDPEVLLIDTRNDYEVAIGTFEGAVDPKTRSFREFPEYIKAHYDPARHKKVAMFCTGGIRCEKASSYMLGAGFEEVFHLRGGILKYLEEVPQEQSLWRGDCFVFDNRVTVRHDLSEGEYDQCHACRNPVSVEDRQSEHYVPGISCPHCWDSLSEKTRAGARERQKQIELARQRNQPHPLGRDPRQSTLEN.

Residues 123–217 (SDPEVLLIDT…YLEEVPQEQS (95 aa)) form the Rhodanese domain. C177 (cysteine persulfide intermediate) is an active-site residue. Positions 282–293 (ARERQKQIELAR) are enriched in basic and acidic residues. The tract at residues 282–312 (ARERQKQIELARQRNQPHPLGRDPRQSTLEN) is disordered.

This sequence belongs to the TrhO family.

The catalysed reaction is uridine(34) in tRNA + AH2 + O2 = 5-hydroxyuridine(34) in tRNA + A + H2O. Functionally, catalyzes oxygen-dependent 5-hydroxyuridine (ho5U) modification at position 34 in tRNAs. The protein is tRNA uridine(34) hydroxylase of Pseudomonas paraeruginosa (strain DSM 24068 / PA7) (Pseudomonas aeruginosa (strain PA7)).